A 484-amino-acid polypeptide reads, in one-letter code: ATP synthase subunit beta (484 aa).

168-175 (GGAGVGKT) contacts ATP.

Belongs to the ATPase alpha/beta chains family. As to quaternary structure, F-type ATPases have 2 components, CF(1) - the catalytic core - and CF(0) - the membrane proton channel. CF(1) has five subunits: alpha(3), beta(3), gamma(1), delta(1), epsilon(1). CF(0) has three main subunits: a(1), b(2) and c(9-12). The alpha and beta chains form an alternating ring which encloses part of the gamma chain. CF(1) is attached to CF(0) by a central stalk formed by the gamma and epsilon chains, while a peripheral stalk is formed by the delta and b chains.

It is found in the cell membrane. It carries out the reaction ATP + H2O + 4 H(+)(in) = ADP + phosphate + 5 H(+)(out). Functionally, produces ATP from ADP in the presence of a proton gradient across the membrane. The catalytic sites are hosted primarily by the beta subunits. This chain is ATP synthase subunit beta, found in Pseudarthrobacter chlorophenolicus (strain ATCC 700700 / DSM 12829 / CIP 107037 / JCM 12360 / KCTC 9906 / NCIMB 13794 / A6) (Arthrobacter chlorophenolicus).